A 297-amino-acid polypeptide reads, in one-letter code: Polyhedral envelope protein (297 aa).

Belongs to the baculoviridae PE family.

It is found in the virion membrane. Major component of the polyhedra envelope. The sequence is that of Polyhedral envelope protein from Orgyia pseudotsugata (Douglas-fir tussock moth).